Here is a 1589-residue protein sequence, read N- to C-terminus: Mediator of RNA polymerase II transcription subunit 23 (1589 aa).

The segment at 1381–1499 (YVSQNEPAPP…PPTPAPMHHQ (119 aa)) is disordered. The segment covering 1392–1410 (TPEREKTPERKDQQKEQQE) has biased composition (basic and acidic residues). Low complexity predominate over residues 1457 to 1470 (LHHQQQQQQHLSQM).

Belongs to the Mediator complex subunit 23 family. As to quaternary structure, component of the Mediator complex.

Its subcellular location is the nucleus. In terms of biological role, component of the Mediator complex, a coactivator involved in the regulated transcription of nearly all RNA polymerase II-dependent genes. Mediator functions as a bridge to convey information from gene-specific regulatory proteins to the basal RNA polymerase II transcription machinery. Mediator is recruited to promoters by direct interactions with regulatory proteins and serves as a scaffold for the assembly of a functional preinitiation complex with RNA polymerase II and the general transcription factors. The chain is Mediator of RNA polymerase II transcription subunit 23 (sur-2) from Caenorhabditis briggsae.